We begin with the raw amino-acid sequence, 625 residues long: Dopamine beta-hydroxylase (625 aa).

Over methionine 1 to arginine 9 the chain is Cytoplasmic. The helical; Signal-anchor for type II membrane protein transmembrane segment at glutamate 10 to leucine 30 threads the bilayer. Residues glutamine 31 to valine 625 lie on the Intragranular side of the membrane. One can recognise a DOMON domain in the interval glycine 50–leucine 166. 6 disulfides stabilise this stretch: cysteine 147–cysteine 604, cysteine 224–cysteine 275, cysteine 261–cysteine 287, cysteine 382–cysteine 495, cysteine 386–cysteine 573, and cysteine 458–cysteine 480. Residue asparagine 177 is glycosylated (N-linked (GlcNAc...) asparagine). Tyrosine 222 is a catalytic residue. Cu(2+) is bound by residues histidine 254 and histidine 255. Asparagine 315 carries an N-linked (GlcNAc...) asparagine glycan. Histidine 325, histidine 404, histidine 406, and methionine 479 together coordinate Cu(2+). Residue histidine 404 is part of the active site. Asparagine 574 is a glycosylation site (N-linked (GlcNAc...) asparagine).

It belongs to the copper type II ascorbate-dependent monooxygenase family. Homotetramer; composed of two disulfide-linked dimers. Requires Cu(2+) as cofactor. Proteolytic cleavage after the membrane-anchor leads to the release of the soluble form. Post-translationally, N-glycosylated.

It is found in the cytoplasmic vesicle. The protein localises to the secretory vesicle lumen. It localises to the secretory vesicle. Its subcellular location is the chromaffin granule lumen. The protein resides in the secreted. It is found in the secretory vesicle membrane. The protein localises to the chromaffin granule membrane. It catalyses the reaction dopamine + 2 L-ascorbate + O2 = (R)-noradrenaline + 2 monodehydro-L-ascorbate radical + H2O. It participates in catecholamine biosynthesis; (R)-noradrenaline biosynthesis; (R)-noradrenaline from dopamine: step 1/1. Catalyzes the hydroxylation of dopamine to noradrenaline (also known as norepinephrine), and is thus vital for regulation of these neurotransmitters. The protein is Dopamine beta-hydroxylase (DBH) of Canis lupus familiaris (Dog).